Reading from the N-terminus, the 87-residue chain is Neutrophil antibiotic peptide NP-3A (87 aa).

An N-terminal signal peptide occupies residues 1 to 19 (MRTLTLLTTLLLLALHTQA). The propeptide occupies 20 to 58 (ESPQGSTKEAPDEEQDISVFFGGDKGTALQDAAVKAGVT). 3 disulfide bridges follow: cysteine 59–cysteine 87, cysteine 61–cysteine 76, and cysteine 66–cysteine 86.

It belongs to the alpha-defensin family. In terms of tissue distribution, highest expression in bone marrow and to a much lesser extent in small intestine.

It localises to the secreted. Its function is as follows. Active in vitro against S.aureus, fungi, Gram-positive and Gram-negative bacteria and to a lesser extent against an enveloped virus. This Rattus norvegicus (Rat) protein is Neutrophil antibiotic peptide NP-3A.